We begin with the raw amino-acid sequence, 196 residues long: MQERIKACFTESIQTQIAAAEALPDAISRAAMTLVQSLLNGNKILCCGNGTSAANAQHFAASMINRFETERPSLPAIALNTDNVVLTAIANDRLHDEVYAKQVRALGHAGDVLLAISTRGNSRDIVKAVEAAVTRDMTIVALTGYDGGELAGLLGPQDVEIRIPSHRSARIQEMHMLTVNCLCDLIDNTLFPHQDV.

In terms of domain architecture, SIS spans 34–196; the sequence is LVQSLLNGNK…DNTLFPHQDV (163 aa).

It belongs to the SIS family. DiaA subfamily. In terms of assembly, homotetramer; dimer of dimers.

Functionally, required for the timely initiation of chromosomal replication via direct interactions with the DnaA initiator protein. This is DnaA initiator-associating protein DiaA from Escherichia coli O6:K15:H31 (strain 536 / UPEC).